Here is a 1091-residue protein sequence, read N- to C-terminus: Voltage-dependent calcium channel subunit alpha-2/delta-3 (1091 aa).

A signal peptide spans 1–28 (MAGPGSPRRASRGASALLAAALLYAALG). Topologically, residues 29–1068 (DVVRSEQQIP…HPEENARECG (1040 aa)) are extracellular. An N-linked (GlcNAc...) asparagine glycan is attached at N166. The region spanning 256–438 (DVVILVDVSG…ENVMEYLHVL (183 aa)) is the VWFA domain. Residues D262, S264, and S266 each coordinate a divalent metal cation. Positions 262 to 266 (DVSGS) match the MIDAS-like motif motif. N-linked (GlcNAc...) asparagine glycosylation is present at N309. Cysteines 412 and 1055 form a disulfide. The Cache domain occupies 452–549 (WTEAYIDSTL…RLLYEEGKKR (98 aa)). 3 N-linked (GlcNAc...) asparagine glycosylation sites follow: N553, N632, and N793. A Phosphotyrosine modification is found at Y924. A helical membrane pass occupies residues 1069–1089 (GAPSLQAQTVLLLLPLLLMLF). Topologically, residues 1090–1091 (SR) are cytoplasmic.

Belongs to the calcium channel subunit alpha-2/delta family. Dimer formed of alpha-2-2 and delta-2 chains; disulfide-linked. Voltage-dependent calcium channels are multisubunit complexes, consisting of alpha-1 (CACNA1), alpha-2 (CACNA2D), beta (CACNB) and delta (CACNA2D) subunits in a 1:1:1:1 ratio. In terms of processing, N-glycosylated. Post-translationally, may be proteolytically processed into subunits alpha-2-3 and delta-3 that are disulfide-linked. It is however unclear whether such cleavage really takes place in vivo and has a functional role. In terms of tissue distribution, only detected in brain. Not present in lung, testis, aorta, spleen, jejunum, ventricular muscle and kidney (at protein level). According to PubMed:11687876, it is brain-specific, while according to PubMed:11245980, it is widely expressed.

Its subcellular location is the membrane. Its function is as follows. The alpha-2/delta subunit of voltage-dependent calcium channels regulates calcium current density and activation/inactivation kinetics of the calcium channel. Acts as a regulatory subunit for P/Q-type calcium channel (CACNA1A), N-type (CACNA1B), L-type (CACNA1C OR CACNA1D) but not T-type (CACNA1G). In Homo sapiens (Human), this protein is Voltage-dependent calcium channel subunit alpha-2/delta-3 (CACNA2D3).